Reading from the N-terminus, the 105-residue chain is ATP-dependent Clp protease adapter protein ClpS (105 aa).

Belongs to the ClpS family. As to quaternary structure, binds to the N-terminal domain of the chaperone ClpA.

Functionally, involved in the modulation of the specificity of the ClpAP-mediated ATP-dependent protein degradation. The polypeptide is ATP-dependent Clp protease adapter protein ClpS (Aeromonas hydrophila subsp. hydrophila (strain ATCC 7966 / DSM 30187 / BCRC 13018 / CCUG 14551 / JCM 1027 / KCTC 2358 / NCIMB 9240 / NCTC 8049)).